The sequence spans 258 residues: Imidazole glycerol phosphate synthase subunit HisF (258 aa).

Catalysis depends on residues aspartate 11 and aspartate 130.

This sequence belongs to the HisA/HisF family. In terms of assembly, heterodimer of HisH and HisF.

Its subcellular location is the cytoplasm. It carries out the reaction 5-[(5-phospho-1-deoxy-D-ribulos-1-ylimino)methylamino]-1-(5-phospho-beta-D-ribosyl)imidazole-4-carboxamide + L-glutamine = D-erythro-1-(imidazol-4-yl)glycerol 3-phosphate + 5-amino-1-(5-phospho-beta-D-ribosyl)imidazole-4-carboxamide + L-glutamate + H(+). It participates in amino-acid biosynthesis; L-histidine biosynthesis; L-histidine from 5-phospho-alpha-D-ribose 1-diphosphate: step 5/9. IGPS catalyzes the conversion of PRFAR and glutamine to IGP, AICAR and glutamate. The HisF subunit catalyzes the cyclization activity that produces IGP and AICAR from PRFAR using the ammonia provided by the HisH subunit. The protein is Imidazole glycerol phosphate synthase subunit HisF of Blochmanniella pennsylvanica (strain BPEN).